The sequence spans 439 residues: Protease Do-like 1, chloroplastic (439 aa).

The interval 154-323 is serine protease; sequence QGSGSGFVWD…IPVDTVGGIV (170 aa). Catalysis depends on charge relay system residues His173, Asp203, and Ser282. Residues 326–423 enclose the PDZ domain; it reads LVRFGKVTRP…EVTVEVLRGD (98 aa).

Belongs to the peptidase S1C family. Interacts with PTAC16 and other potential targets for degradation under high light conditions.

The protein localises to the plastid. It localises to the chloroplast thylakoid membrane. Inhibited by phenylmethylsulfonyl fluoride and O-phenanthroline. Its function is as follows. Serine protease that is required at high temperature. May be involved in the degradation of damaged proteins. In vivo, can degrade beta-casein. This chain is Protease Do-like 1, chloroplastic (DEGP1), found in Arabidopsis thaliana (Mouse-ear cress).